A 325-amino-acid polypeptide reads, in one-letter code: MNALTAVQNNAVDSGQDYSGFTLIPSAQSPRLPELTFTEQTTNRFLEQVAEWPVQALEYKSFLRFRVGKILDDLCANQLQPLLLKTLLNRAEGALLINAVGIDDVAQADEMVKLATAVAHLIGRSNFDAMSGQYYARFVVKNVDNSDSYLRQPHRVMELHNDGTYVEEITDYVLMMKIDEQNMQGGNSLLLHLDDWEHLDLFFRHPLARRPMRFAAPPSKNVSKDVFYPVFDVDQQGRPVMRYIDQFVQPKDFEEGVWLSELSDAIETSKGILSVPVPVGKFLLINNLFWLHGRDRFTPHPDLRRELMRQRGYFAYATHHYQTHQ.

3 residues coordinate Fe cation: His-160, Asp-162, and His-292.

This sequence belongs to the glutarate hydroxylase family. As to quaternary structure, homotetramer. Fe(2+) serves as cofactor.

It carries out the reaction glutarate + 2-oxoglutarate + O2 = (S)-2-hydroxyglutarate + succinate + CO2. Its pathway is amino-acid degradation. Acts as an alpha-ketoglutarate-dependent dioxygenase catalyzing hydroxylation of glutarate (GA) to L-2-hydroxyglutarate (L2HG). Functions in a L-lysine degradation pathway that proceeds via cadaverine, glutarate and L-2-hydroxyglutarate. The protein is Glutarate 2-hydroxylase of Escherichia coli O127:H6 (strain E2348/69 / EPEC).